A 267-amino-acid polypeptide reads, in one-letter code: Large ribosomal subunit protein uL4 (267 aa).

Belongs to the universal ribosomal protein uL4 family. In terms of assembly, part of the 50S ribosomal subunit.

In terms of biological role, one of the primary rRNA binding proteins, this protein initially binds near the 5'-end of the 23S rRNA. It is important during the early stages of 50S assembly. It makes multiple contacts with different domains of the 23S rRNA in the assembled 50S subunit and ribosome. Functionally, forms part of the polypeptide exit tunnel. This is Large ribosomal subunit protein uL4 from Saccharolobus islandicus (strain L.S.2.15 / Lassen #1) (Sulfolobus islandicus).